Here is a 353-residue protein sequence, read N- to C-terminus: G-protein complex alpha subunit gpaA (353 aa).

The interval 1-25 is disordered; that stretch reads MGCGMSTEDKEGKARNEEIENQLKR. Residues 7–25 show a composition bias toward basic and acidic residues; that stretch reads TEDKEGKARNEEIENQLKR. The G-alpha domain occupies 32-353; sequence NEIKMLLLGA…QENLRLCGLI (322 aa). The tract at residues 35-48 is G1 motif; sequence KMLLLGAGESGKST. Residues Ser-47 and Thr-181 each contribute to the a divalent metal cation site. Residues 173–181 are G2 motif; the sequence is DVLRSRVKT. The tract at residues 196-205 is G3 motif; it reads YRMFDVGGQR. The interval 265 to 272 is G4 motif; the sequence is ILFLNKID. Residues 323–328 are G5 motif; sequence TCATDT.

It belongs to the G-alpha family. G(q) subfamily. As to quaternary structure, g proteins are composed of 3 units; alpha, beta and gamma. The alpha chain contains the guanine nucleotide binding site. Interacts with gprM.

In terms of biological role, G-protein complex alpha subunit that plays a role in conidiation and regulation of the biosynthesis of secondary metabolites such as dihydroxynaphthalene (DHN)-melanin, via interaction with the G protein-coupled receptor gprM. This is G-protein complex alpha subunit gpaA from Aspergillus fumigatus (strain CBS 144.89 / FGSC A1163 / CEA10) (Neosartorya fumigata).